The primary structure comprises 466 residues: MATEGDKLLGGRFVGSTDPIMEILSSSISTEQRLTEVDIQASMAYAKALEKASILTKTELEKILSGLEKISEESSKGVLVMTQSDEDIQTAIERRLKELIGDIAGKLQTGRSRNEQVVTDLKLLLKSSISVISTHLLQLIKTLVERAAIEIDIIMPGYTHLQKALPIRWSQFLLSHAVALTRDSERLGEVKKRITVLPLGSGALAGNPLEIDRELLRSELDMTSITLNSIDAISERDFVVELISVATLLMIHLSKLAEDLIIFSTTEFGFVTLSDAYSTGSSLLPQKKNPDSLELIRSKAGRVFGRLAAILMVLKGIPSTFSKDLQEDKEAVLDVVDTLTAVLQVATGVISTLQVNKENMEKALTPELLSTDLALYLVRKGMPIRQAQTASGKAVHLAETKGITINNLTLEDLKSISPLFASDVSQVFSVVNSVEQYTAVGGTAKSSVTAQIEQLRELLKKQKEQA.

Ala-2 carries the post-translational modification Blocked amino end (Ala).

The protein belongs to the lyase 1 family. Argininosuccinate lyase subfamily. Homotetramer. The N-terminus is blocked. In terms of tissue distribution, eye lens.

Functionally, delta crystallin, the principal crystallin in embryonic lens, is found only in birds and reptiles. This is Delta-1 crystallin (ASL1) from Gallus gallus (Chicken).